A 373-amino-acid polypeptide reads, in one-letter code: tRNA-specific 2-thiouridylase MnmA (373 aa).

Residues 12 to 19 (GMSGGVDS) and methionine 38 contribute to the ATP site. Residues 98–100 (NPD) are interaction with target base in tRNA. Cysteine 103 (nucleophile) is an active-site residue. Cysteine 103 and cysteine 200 form a disulfide bridge. Glycine 127 is a binding site for ATP. Residues 150–152 (KDQ) form an interaction with tRNA region. Cysteine 200 (cysteine persulfide intermediate) is an active-site residue. Residues 312–313 (RY) are interaction with tRNA.

The protein belongs to the MnmA/TRMU family.

It localises to the cytoplasm. It carries out the reaction S-sulfanyl-L-cysteinyl-[protein] + uridine(34) in tRNA + AH2 + ATP = 2-thiouridine(34) in tRNA + L-cysteinyl-[protein] + A + AMP + diphosphate + H(+). In terms of biological role, catalyzes the 2-thiolation of uridine at the wobble position (U34) of tRNA, leading to the formation of s(2)U34. The protein is tRNA-specific 2-thiouridylase MnmA of Streptococcus pneumoniae (strain P1031).